The sequence spans 379 residues: Tryptophan 2,3-dioxygenase (379 aa).

Substrate-binding positions include 57-61 and R128; that span reads FIITH. A heme-binding site is contributed by H312. T327 is a binding site for substrate.

This sequence belongs to the tryptophan 2,3-dioxygenase family. In terms of assembly, homotetramer. Dimer of dimers. Heme is required as a cofactor.

The catalysed reaction is L-tryptophan + O2 = N-formyl-L-kynurenine. It functions in the pathway amino-acid degradation; L-tryptophan degradation via kynurenine pathway; L-kynurenine from L-tryptophan: step 1/2. Its pathway is pigment biosynthesis; ommochrome biosynthesis. Its function is as follows. Heme-dependent dioxygenase that catalyzes the oxidative cleavage of the L-tryptophan (L-Trp) pyrrole ring and converts L-tryptophan to N-formyl-L-kynurenine. Catalyzes the oxidative cleavage of the indole moiety. The polypeptide is Tryptophan 2,3-dioxygenase (Drosophila sechellia (Fruit fly)).